The chain runs to 330 residues: MSKVSFIGGGSFGTALAILLAEKGNTVSIYNRDKKVVDDININRRNDKYIKNLQVPSNIKAFDNLEKATEDAEYIVLAIPSHTIRSICKQLKNKIKQETIIISIAKGIEEHTDKRLSLVIKEELNNPIVVLSGPSHAEEVVLKLPTTLVVSSENMNAASEAQNLFMTSFFRVYTNEDLVGVEVGGAVKNIIALAAGILDGLGYGDNTKAALMTRGMKEISRIGSALGGKEETFYGLTGMGDLIVTCTSNHSRNRKAGLLIGSGMDVNKAIEKIGMVVEGVKACKAFYELKEKIGVSMPITDILYKVLFEKKDPKSGIEELMLREKKSEIF.

The NADPH site is built by Ser11, Phe12, Arg32, and Lys106. Positions 106, 133, and 135 each coordinate sn-glycerol 3-phosphate. Ala137 provides a ligand contact to NADPH. Residues Lys188, Asp241, Ser251, Arg252, and Asn253 each contribute to the sn-glycerol 3-phosphate site. Lys188 serves as the catalytic Proton acceptor. Arg252 is an NADPH binding site. 2 residues coordinate NADPH: Val276 and Glu278.

This sequence belongs to the NAD-dependent glycerol-3-phosphate dehydrogenase family.

It localises to the cytoplasm. The catalysed reaction is sn-glycerol 3-phosphate + NAD(+) = dihydroxyacetone phosphate + NADH + H(+). It catalyses the reaction sn-glycerol 3-phosphate + NADP(+) = dihydroxyacetone phosphate + NADPH + H(+). It functions in the pathway membrane lipid metabolism; glycerophospholipid metabolism. Functionally, catalyzes the reduction of the glycolytic intermediate dihydroxyacetone phosphate (DHAP) to sn-glycerol 3-phosphate (G3P), the key precursor for phospholipid synthesis. The chain is Glycerol-3-phosphate dehydrogenase [NAD(P)+] from Clostridium botulinum (strain Alaska E43 / Type E3).